Here is a 408-residue protein sequence, read N- to C-terminus: Peptidase T (408 aa).

A Zn(2+)-binding site is contributed by H78. D80 is a catalytic residue. Position 140 (D140) interacts with Zn(2+). E173 acts as the Proton acceptor in catalysis. E174, D196, and H379 together coordinate Zn(2+).

It belongs to the peptidase M20B family. The cofactor is Zn(2+).

Its subcellular location is the cytoplasm. The catalysed reaction is Release of the N-terminal residue from a tripeptide.. In terms of biological role, cleaves the N-terminal amino acid of tripeptides. The protein is Peptidase T of Salmonella arizonae (strain ATCC BAA-731 / CDC346-86 / RSK2980).